The primary structure comprises 197 residues: 7-methyl-GTP pyrophosphatase (197 aa).

Aspartate 69 functions as the Proton acceptor in the catalytic mechanism.

Belongs to the Maf family. YceF subfamily. The cofactor is a divalent metal cation.

Its subcellular location is the cytoplasm. The catalysed reaction is N(7)-methyl-GTP + H2O = N(7)-methyl-GMP + diphosphate + H(+). Nucleoside triphosphate pyrophosphatase that hydrolyzes 7-methyl-GTP (m(7)GTP). May have a dual role in cell division arrest and in preventing the incorporation of modified nucleotides into cellular nucleic acids. This Syntrophotalea carbinolica (strain DSM 2380 / NBRC 103641 / GraBd1) (Pelobacter carbinolicus) protein is 7-methyl-GTP pyrophosphatase.